The following is a 48-amino-acid chain: Protein TUNAR (48 aa).

The segment at 1-20 (MVITSENDEDRGGQEKESKE) is disordered. Over residues 10 to 20 (DRGGQEKESKE) the composition is skewed to basic and acidic residues. Residues 24-44 (LAMLGIIGTILNLIVIIFVYI) form a helical membrane-spanning segment.

In terms of assembly, interacts with ATPase ATP2A2/SERCA2. Interacts with ATPase ATP2A3/SERCA3; the interaction occurs at low levels in low glucose conditions and is increased by high glucose levels. As to expression, highly expressed in pancreatic islets where it is enriched in the insulin-producing beta cells.

It is found in the endoplasmic reticulum membrane. Its subcellular location is the extracellular vesicle membrane. In neurons, plays a role in the regulation of intracellular Ca(2+), possibly by acting as an activator of ATP2A2/SERCA2, thus increasing the efficiency with which Ca(2+) is removed from the cytoplasm. Inhibits differentiation of embryonic stem cells into neurons and inhibits neurite outgrowth, likely as a result of its role in intracellular Ca(2+) regulation. In pancreatic beta cells, lowers Ca(2+) levels in the endoplasmic reticulum and enhances glucose-stimulated insulin secretion. This Homo sapiens (Human) protein is Protein TUNAR.